The chain runs to 584 residues: Aspartate--tRNA ligase (584 aa).

Glutamate 169 contacts L-aspartate. An aspartate region spans residues 193-196 (QLFK). Arginine 215 is a binding site for L-aspartate. Residues 215 to 217 (RDE) and glutamine 224 each bind ATP. Residue histidine 446 participates in L-aspartate binding. Glutamate 480 contacts ATP. Arginine 487 is an L-aspartate binding site. Position 532-535 (532-535 (GLDR)) interacts with ATP.

The protein belongs to the class-II aminoacyl-tRNA synthetase family. Type 1 subfamily. As to quaternary structure, homodimer.

It is found in the cytoplasm. The enzyme catalyses tRNA(Asp) + L-aspartate + ATP = L-aspartyl-tRNA(Asp) + AMP + diphosphate. Functionally, catalyzes the attachment of L-aspartate to tRNA(Asp) in a two-step reaction: L-aspartate is first activated by ATP to form Asp-AMP and then transferred to the acceptor end of tRNA(Asp). This Buchnera aphidicola subsp. Schizaphis graminum (strain Sg) protein is Aspartate--tRNA ligase.